The sequence spans 223 residues: Neurotrophic factor BDNF precursor form (223 aa).

Positions 1 to 5 (SCMKA) are cleaved as a signal peptide. Residues 6-114 (APMKEVSIRG…AANMSMRVRR (109 aa)) constitute a propeptide that is removed on maturation. Asn-107 is a glycosylation site (N-linked (GlcNAc...) asparagine). 2 cysteine pairs are disulfide-bonded: Cys-127–Cys-194 and Cys-172–Cys-223.

Belongs to the NGF-beta family.

Its subcellular location is the secreted. Functionally, promotes the survival of neuronal populations that are all located either in the central nervous system or directly connected to it. The polypeptide is Neurotrophic factor BDNF precursor form (BDNF) (Candoia carinata (Papuan tree boa)).